The chain runs to 669 residues: UvrABC system protein B (669 aa).

The 388-residue stretch at 27-414 folds into the Helicase ATP-binding domain; sequence ESLQGEHKFQ…EARVIEQVIR (388 aa). 40–47 contacts ATP; it reads GATGTGKT. A Beta-hairpin motif is present at residues 93–116; sequence YYDYYQPEAYIPVTDTYIEKTASI. Positions 431 to 597 constitute a Helicase C-terminal domain; sequence QVDDLYGEIQ…PINKRANNAI (167 aa). The UVR domain occupies 628–663; it reads PDLIQQLEEKMQEAAKKQEFEVAAIYRDRIQHLRDR.

Belongs to the UvrB family. Forms a heterotetramer with UvrA during the search for lesions. Interacts with UvrC in an incision complex.

Its subcellular location is the cytoplasm. The UvrABC repair system catalyzes the recognition and processing of DNA lesions. A damage recognition complex composed of 2 UvrA and 2 UvrB subunits scans DNA for abnormalities. Upon binding of the UvrA(2)B(2) complex to a putative damaged site, the DNA wraps around one UvrB monomer. DNA wrap is dependent on ATP binding by UvrB and probably causes local melting of the DNA helix, facilitating insertion of UvrB beta-hairpin between the DNA strands. Then UvrB probes one DNA strand for the presence of a lesion. If a lesion is found the UvrA subunits dissociate and the UvrB-DNA preincision complex is formed. This complex is subsequently bound by UvrC and the second UvrB is released. If no lesion is found, the DNA wraps around the other UvrB subunit that will check the other stand for damage. The sequence is that of UvrABC system protein B from Synechocystis sp. (strain ATCC 27184 / PCC 6803 / Kazusa).